A 536-amino-acid chain; its full sequence is Proto-oncogene tyrosine-protein kinase Src (536 aa).

A disordered region spans residues 1–53 (MGSNKSKPKDASQRRRSLEPAENVHGAGGGAFPASQTPSKPASADGHRGPSAA). A lipid anchor (N-myristoyl glycine) is attached at Gly-2. A compositionally biased stretch (basic and acidic residues) spans 7–19 (KPKDASQRRRSLE). Phosphoserine is present on Ser-17. A Phosphoserine; by CDK5 modification is found at Ser-75. Residues 84–145 (GGVTTFVALY…PSNYVAPSDS (62 aa)) form the SH3 domain. The SH2 domain occupies 151 to 248 (WYFGKITRRE…GLCHRLTTVC (98 aa)). A Phosphotyrosine modification is found at Tyr-187. One can recognise a Protein kinase domain in the interval 270 to 523 (LRLEVKLGQG…YLQAFLEDYF (254 aa)). ATP is bound by residues 276–284 (LGQGCFGEV) and Lys-298. Residue Asp-389 is the Proton acceptor of the active site. Tyr-419 bears the Phosphotyrosine; by autocatalysis mark. Phosphotyrosine; by FAK2 is present on Tyr-419. Tyr-530 bears the Phosphotyrosine; by CSK mark.

It belongs to the protein kinase superfamily. Tyr protein kinase family. SRC subfamily. In terms of assembly, part of a complex comprised of PTPRA, BCAR1, BCAR3 (via SH2 domain) and SRC; the formation of the complex is dependent on integrin mediated-tyrosine phosphorylation of PTPRA. Interacts with DDEF1/ASAP1; via the SH3 domain. Interacts with CCPG1. Identified in a complex containing FGFR4, NCAM1, CDH2, PLCG1, FRS2, SRC, SHC1, GAP43 and CTTN. Interacts with ERBB2, STAT1 and PNN. Interacts with DDR1, DDR2 and DAB2. Interacts with CDCP1, TGFB1I1 and TOM1L2. Interacts with the cytoplasmic domain of MUC1, phosphorylates it and increases binding of MUC1 with beta-catenin. Interacts with RALGPS1; via the SH3 domain. Interacts with CAV2 (tyrosine phosphorylated form). Interacts (via the SH3 domain and the protein kinase domain) with ARRB1; the interaction is independent of the phosphorylation state of SRC C-terminus. Interacts with ARRB1 and ARRB2. Interacts with SRCIN1. Interacts with NDFIP2 and more weakly with NDFIP1. Interacts with PIK3CA and/or PIK3C2B, PTK2/FAK1 and ESR1 (dimethylated on arginine). Interacts with FASLG. Interacts (via SH2 domain) with the 'Tyr-402' phosphorylated form of PTK2B/PYK2. Interacts (via SH2 domain) with FLT3 (tyrosine phosphorylated). Interacts with PDGFRA (tyrosine phosphorylated). Interacts with CSF1R. Interacts (via SH2 and SH3 domain) with TNK2. Interacts (via protein kinase domain) with the tyrosine phosphorylated form of RUNX3 (via runt domain). Interacts with TRAF3 (via RING-type zinc finger domain). Interacts with RIGI, MAVS and TBK1. Interacts (via SH2 domain) with RACK1; the interaction is enhanced by tyrosine phosphorylation of RACK1 and inhibits SRC activity. Interacts with EPHB1; activates the MAPK/ERK cascade to regulate cell migration. Interacts with FCAMR. Interacts (via SH2 domain) with the 'Tyr-9' phosphorylated form of PDPK1. Interacts with AMOTL2; this interaction regulates the translocation of phosphorylated SRC to peripheral cell-matrix adhesion sites. Interacts with TRAP1. Interacts with CBLC; the interaction is enhanced when SRC is phosphorylated at Tyr-419. Interacts with ARHGEF5. Interacts (via cytoplasmic domain) with CEACAM1 (via SH2 domain); this interaction is regulated by trans-homophilic cell adhesion. Interacts with MPP2. Interacts with PRR7. Interacts (via kinase domain and to a lesser extent the SH2 domain) directly with PDLIM4; this interaction results in PTPN13-mediated dephosphorylation of this protein leading to its inactivation. Interacts with P85 (PIK3R1 or PIK3R2). Interacts with HNRNPA2B1. Interacts with IL6ST/gp130. Interacts (via SH3 domain) with PELP1 in the presence of 17-beta-estradiol. Interacts with AMBRA1. As to quaternary structure, (Microbial infection) Interacts with HEV ORF3 protein; via the SH3 domain. (Microbial infection) Interacts (via SH2 domain) with HCV non-structural protein 5A (via N-terminus). In terms of processing, myristoylated at Gly-2, and this is essential for targeting to membranes. Post-translationally, dephosphorylated at Tyr-530 by PTPRJ. Phosphorylated on Tyr-530 by c-Src kinase (CSK). The phosphorylated form is termed pp60c-src. Dephosphorylated by PTPRJ at Tyr-419. Normally maintained in an inactive conformation with the SH2 domain engaged with Tyr-530, the SH3 domain engaged with the SH2-kinase linker, and Tyr-419 dephosphorylated. Dephosphorylation of Tyr-530 as a result of protein tyrosine phosphatase (PTP) action disrupts the intramolecular interaction between the SH2 domain and Tyr-530, Tyr-419 can then become autophosphorylated, resulting in SRC activation. Phosphorylation of Tyr-530 by CSK allows this interaction to reform, resulting in SRC inactivation. CDK5-mediated phosphorylation at Ser-75 targets SRC to ubiquitin-dependent degradation and thus leads to cytoskeletal reorganization. Phosphorylated by PTK2/FAK1; this enhances kinase activity. Phosphorylated by PTK2B/PYK2; this enhances kinase activity. Upon activation of IL6ST by IL6, Tyr-419 is phosphorylated and Tyr-530 dephosphorylated. Displays reduced levels of autophosphorylation at Tyr-419 compared to isoforms 2 and 3. In terms of processing, displays enhanced levels of autophosphorylation at Tyr-419 compared to isoform 1. Post-translationally, displays enhanced levels of autophosphorylation at Tyr-419 compared to isoform 1. Shows reduced phosphorylation at Tyr-527 compared to isoforms 1 and 2. S-nitrosylation is important for activation of its kinase activity. In terms of processing, ubiquitinated in response to CDK5-mediated phosphorylation. Ubiquitination mediated by CBLC requires SRC autophosphorylation at Tyr-419 and may lead to lysosomal degradation. Expressed ubiquitously. Expressed in the skin (at protein level). Platelets, neurons and osteoclasts express 5-fold to 200-fold higher levels than most other tissues. In terms of tissue distribution, expressed in spleen and liver. As to expression, expressed in brain.

It localises to the cell membrane. Its subcellular location is the mitochondrion inner membrane. The protein localises to the nucleus. The protein resides in the cytoplasm. It is found in the cytoskeleton. It localises to the perinuclear region. Its subcellular location is the cell junction. The protein localises to the focal adhesion. The catalysed reaction is L-tyrosyl-[protein] + ATP = O-phospho-L-tyrosyl-[protein] + ADP + H(+). Its activity is regulated as follows. Phosphorylation by CSK at Tyr-530 inhibits kinase activity. Inhibitory phosphorylation at Tyr-530 is enhanced by heme. Further phosphorylation by CDK1 partially reactivates CSK-inactivated SRC and facilitates complete reactivation by protein tyrosine phosphatase PTPRC. Integrin engagement stimulates kinase activity. Phosphorylation by PTK2/FAK1 enhances kinase activity. Butein and pseudosubstrate-based peptide inhibitors like CIYKYYF act as inhibitors. Phosphorylation at Tyr-419 increases kinase activity. Non-receptor protein tyrosine kinase which is activated following engagement of many different classes of cellular receptors including immune response receptors, integrins and other adhesion receptors, receptor protein tyrosine kinases, G protein-coupled receptors as well as cytokine receptors. Participates in signaling pathways that control a diverse spectrum of biological activities including gene transcription, immune response, cell adhesion, cell cycle progression, apoptosis, migration, and transformation. Due to functional redundancy between members of the SRC kinase family, identification of the specific role of each SRC kinase is very difficult. SRC appears to be one of the primary kinases activated following engagement of receptors and plays a role in the activation of other protein tyrosine kinase (PTK) families. Receptor clustering or dimerization leads to recruitment of SRC to the receptor complexes where it phosphorylates the tyrosine residues within the receptor cytoplasmic domains. Plays an important role in the regulation of cytoskeletal organization through phosphorylation of specific substrates such as AFAP1. Phosphorylation of AFAP1 allows the SRC SH2 domain to bind AFAP1 and to localize to actin filaments. Cytoskeletal reorganization is also controlled through the phosphorylation of cortactin (CTTN). When cells adhere via focal adhesions to the extracellular matrix, signals are transmitted by integrins into the cell resulting in tyrosine phosphorylation of a number of focal adhesion proteins, including PTK2/FAK1 and paxillin (PXN). In addition to phosphorylating focal adhesion proteins, SRC is also active at the sites of cell-cell contact adherens junctions and phosphorylates substrates such as beta-catenin (CTNNB1), delta-catenin (CTNND1), and plakoglobin (JUP). Another type of cell-cell junction, the gap junction, is also a target for SRC, which phosphorylates connexin-43 (GJA1). SRC is implicated in regulation of pre-mRNA-processing and phosphorylates RNA-binding proteins such as KHDRBS1. Phosphorylates PKP3 at 'Tyr-195' in response to reactive oxygen species, which may cause the release of PKP3 from desmosome cell junctions into the cytoplasm. Also plays a role in PDGF-mediated tyrosine phosphorylation of both STAT1 and STAT3, leading to increased DNA binding activity of these transcription factors. Involved in the RAS pathway through phosphorylation of RASA1 and RASGRF1. Plays a role in EGF-mediated calcium-activated chloride channel activation. Required for epidermal growth factor receptor (EGFR) internalization through phosphorylation of clathrin heavy chain (CLTC and CLTCL1) at 'Tyr-1477'. Involved in beta-arrestin (ARRB1 and ARRB2) desensitization through phosphorylation and activation of GRK2, leading to beta-arrestin phosphorylation and internalization. Has a critical role in the stimulation of the CDK20/MAPK3 mitogen-activated protein kinase cascade by epidermal growth factor. Might be involved not only in mediating the transduction of mitogenic signals at the level of the plasma membrane but also in controlling progression through the cell cycle via interaction with regulatory proteins in the nucleus. Plays an important role in osteoclastic bone resorption in conjunction with PTK2B/PYK2. Both the formation of a SRC-PTK2B/PYK2 complex and SRC kinase activity are necessary for this function. Recruited to activated integrins by PTK2B/PYK2, thereby phosphorylating CBL, which in turn induces the activation and recruitment of phosphatidylinositol 3-kinase to the cell membrane in a signaling pathway that is critical for osteoclast function. Promotes energy production in osteoclasts by activating mitochondrial cytochrome C oxidase. Phosphorylates DDR2 on tyrosine residues, thereby promoting its subsequent autophosphorylation. Phosphorylates RUNX3 and COX2 on tyrosine residues, TNK2 on 'Tyr-284' and CBL on 'Tyr-731'. Enhances RIGI-elicited antiviral signaling. Phosphorylates PDPK1 at 'Tyr-9', 'Tyr-373' and 'Tyr-376'. Phosphorylates BCAR1 at 'Tyr-128'. Phosphorylates CBLC at multiple tyrosine residues, phosphorylation at 'Tyr-341' activates CBLC E3 activity. Phosphorylates synaptic vesicle protein synaptophysin (SYP). Involved in anchorage-independent cell growth. Required for podosome formation. Mediates IL6 signaling by activating YAP1-NOTCH pathway to induce inflammation-induced epithelial regeneration. Phosphorylates OTUB1, promoting deubiquitination of RPTOR. Phosphorylates caspase CASP8 at 'Tyr-380' which negatively regulates CASP8 processing and activation, down-regulating CASP8 proapoptotic function. In terms of biological role, non-receptor protein tyrosine kinase which phosphorylates synaptophysin with high affinity. Its function is as follows. Non-receptor protein tyrosine kinase which shows higher basal kinase activity than isoform 1, possibly due to weakened intramolecular interactions which enhance autophosphorylation of Tyr-419 and subsequent activation. The SH3 domain shows reduced affinity with the linker sequence between the SH2 and kinase domains which may account for the increased basal activity. Displays altered substrate specificity compared to isoform 1, showing weak affinity for synaptophysin and for peptide substrates containing class I or class II SH3 domain-binding motifs. Plays a role in L1CAM-mediated neurite elongation, possibly by acting downstream of L1CAM to drive cytoskeletal rearrangements involved in neurite outgrowth. Functionally, non-receptor protein tyrosine kinase which shows higher basal kinase activity than isoform 1, possibly due to weakened intramolecular interactions which enhance autophosphorylation of Tyr-419 and subsequent activation. The SH3 domain shows reduced affinity with the linker sequence between the SH2 and kinase domains which may account for the increased basal activity. Displays altered substrate specificity compared to isoform 1, showing weak affinity for synaptophysin and for peptide substrates containing class I or class II SH3 domain-binding motifs. Plays a role in neurite elongation. This is Proto-oncogene tyrosine-protein kinase Src from Homo sapiens (Human).